A 426-amino-acid chain; its full sequence is Isocitrate dehydrogenase [NADP] (426 aa).

Serine 123, asparagine 125, arginine 129, arginine 139, and arginine 162 together coordinate D-threo-isocitrate. Position 312 (aspartate 312) interacts with Mg(2+). NADP(+) is bound by residues 344–350 (HGTAWDI), asparagine 357, and lysine 404.

Belongs to the isocitrate and isopropylmalate dehydrogenases family. As to quaternary structure, homodimer. Mg(2+) serves as cofactor. Requires Mn(2+) as cofactor.

The enzyme catalyses D-threo-isocitrate + NADP(+) = 2-oxoglutarate + CO2 + NADPH. Catalyzes the oxidative decarboxylation of isocitrate to 2-oxoglutarate and carbon dioxide with the concomitant reduction of NADP(+). The chain is Isocitrate dehydrogenase [NADP] (icd) from Aquifex aeolicus (strain VF5).